The sequence spans 662 residues: MEARVAWGALAGPLRVLCVLCCLLGRAIAAPSPIIKFPGDVAPKTDKELAVQYLNTFYGCPKESCNLFVLKDTLKKMQKFFGLPQTGDLDQNTIETMRKPRCGNPDVANYNFFPRKPKWDKNQITYRIIGYTPDLDPETVDDAFARALKVWSDVTPLRFSRIHDGEADIMINFGRWEHGDGYPFDGKDGLLAHAFAPGTGVGGDSHFDDDELWTLGEGQVVRVKYGNADGEYCKFPFLFNGREYSSCTDTGRSDGFLWCSTTYNFEKDGKYGFCPHEALFTMGGNADGQPCKFPFRFQGTSYNSCTTEGRTDGYRWCGTTEDYDRDKKYGFCPETAMSTVGGNSEGAPCVFPFTFLGNKYESCTSAGRNDGKVWCATTTNYDDDRKWGFCPDQGYSLFLVAAHEFGHAMGLEHSQDPGALMAPIYTYTKNFRLSHDDIKGIQELYGPSPDADTDTGTGPTPTLGPVTPEICKQDIVFDGIAQIRGEIFFFKDRFIWRTVTPRDKPTGPLLVATFWPELPEKIDAVYEAPQEEKAVFFAGNEYWVYSASTLERGYPKPLTSLGLPPDVQQVDAAFNWSKNKKTYIFAGDKFWRYNEVKKKMDPGFPKLIADSWNAIPDNLDAVVDLQGGGHSYFFKGAYYLKLENQSLKSVKFGSIKSDWLGC.

An N-terminal signal peptide occupies residues 1 to 29 (MEARVAWGALAGPLRVLCVLCCLLGRAIA). A propeptide spans 30–109 (APSPIIKFPG…PRCGNPDVAN (80 aa)) (activation peptide). Positions 100–107 (PRCGNPDV) match the Cysteine switch motif. C102 is a Zn(2+) binding site. The collagenase-like 1 stretch occupies residues 110-221 (YNFFPRKPKW…LWTLGEGQVV (112 aa)). Ca(2+) is bound by residues D134 and D168. Zn(2+) contacts are provided by H178 and D180. D185 and G186 together coordinate Ca(2+). H193 contributes to the Zn(2+) binding site. Ca(2+) is bound by residues G200, G202, and D204. Zn(2+) is bound at residue H206. D208, D209, and E211 together coordinate Ca(2+). Residues 222–396 (RVKYGNADGE…WGFCPDQGYS (175 aa)) form a collagen-binding region. 3 consecutive Fibronectin type-II domains span residues 228-276 (ADGE…FCPH), 286-334 (ADGQ…FCPE), and 344-392 (SEGA…FCPD). 6 disulfide bridges follow: C233/C259, C247/C274, C291/C317, C305/C332, C349/C375, and C363/C390. The interval 397-467 (LFLVAAHEFG…GPTPTLGPVT (71 aa)) is collagenase-like 2. Residue H403 participates in Zn(2+) binding. Residue E404 is part of the active site. Zn(2+) is bound by residues H407 and H413. The required for inhibitor TIMP2 binding stretch occupies residues 414 to 662 (SQDPGALMAP…GSIKSDWLGC (249 aa)). Positions 446–465 (GPSPDADTDTGTGPTPTLGP) are disordered. Cysteines 471 and 662 form a disulfide. 4 Hemopexin repeats span residues 474–518 (DIVF…WPEL), 519–565 (PEKI…GLPP), 567–615 (VQQV…WNAI), and 616–662 (PDNL…WLGC). Ca(2+)-binding residues include D478, D523, and D571. A glycan (N-linked (GlcNAc...) asparagine) is linked at N575. Residue D620 coordinates Ca(2+). A glycan (N-linked (GlcNAc...) asparagine) is linked at N644.

The protein belongs to the peptidase M10A family. As to quaternary structure, interacts (via the C-terminal hemopexin-like domains-containing region) with the integrin alpha-V/beta-3; the interaction promotes vascular invasion in angiogenic vessels and melamoma cells. Interacts (via the C-terminal PEX domain) with TIMP2 (via the C-terminal); the interaction inhibits the degradation activity. Interacts with GSK3B. The cofactor is Ca(2+). It depends on Zn(2+) as a cofactor. Post-translationally, phosphorylation on multiple sites modulates enzymatic activity. Phosphorylated by PKC in vitro. In terms of processing, the propeptide is processed by MMP14 (MT-MMP1) and MMP16 (MT-MMP3). Autocatalytic cleavage in the C-terminal produces the anti-angiogenic peptide, PEX. This processing appears to be facilitated by binding integrinv/beta3.

The protein localises to the secreted. Its subcellular location is the extracellular space. The protein resides in the extracellular matrix. It localises to the membrane. It is found in the nucleus. The protein localises to the cytoplasm. Its subcellular location is the mitochondrion. The enzyme catalyses Cleavage of gelatin type I and collagen types IV, V, VII, X. Cleaves the collagen-like sequence Pro-Gln-Gly-|-Ile-Ala-Gly-Gln.. In terms of biological role, ubiquitinous metalloproteinase that is involved in diverse functions such as remodeling of the vasculature, angiogenesis, tissue repair, tumor invasion, inflammation, and atherosclerotic plaque rupture. As well as degrading extracellular matrix proteins, can also act on several nonmatrix proteins such as big endothelial 1 and beta-type CGRP promoting vasoconstriction. Also cleaves KISS at a Gly-|-Leu bond. Appears to have a role in myocardial cell death pathways. Contributes to myocardial oxidative stress by regulating the activity of GSK3beta. Cleaves GSK3beta in vitro. Involved in the formation of the fibrovascular tissues. Functionally, PEX, the C-terminal non-catalytic fragment of MMP2, possesses anti-angiogenic and anti-tumor properties and inhibits cell migration and cell adhesion to FGF2 and vitronectin. Ligand for integrin alpha-v/beta-3 on the surface of blood vessels. Its function is as follows. Mediates the proteolysis of CHUK/IKKA and initiates a primary innate immune response by inducing mitochondrial-nuclear stress signaling with activation of the pro-inflammatory NF-kappaB, NFAT and IRF transcriptional pathways. The polypeptide is 72 kDa type IV collagenase (Mmp2) (Mus musculus (Mouse)).